The following is an 84-amino-acid chain: RNA-binding protein Hfq (84 aa).

Positions Asp-10–Val-70 constitute a Sm domain.

Belongs to the Hfq family. As to quaternary structure, homohexamer.

In terms of biological role, RNA chaperone that binds small regulatory RNA (sRNAs) and mRNAs to facilitate mRNA translational regulation in response to envelope stress, environmental stress and changes in metabolite concentrations. Also binds with high specificity to tRNAs. The sequence is that of RNA-binding protein Hfq from Moorella thermoacetica (strain ATCC 39073 / JCM 9320).